The following is a 501-amino-acid chain: Dipeptide and tripeptide permease A (501 aa).

Residues 1-21 are Cytoplasmic-facing; the sequence is MSTANKKPTESVSLNAFKQPK. Residues 22 to 44 form a helical membrane-spanning segment; the sequence is AFYLIFSIELWERFGYYGLQGIM. Over 45–59 the chain is Periplasmic; sequence AVYLVKQLGMSEADS. The helical transmembrane segment at 60 to 80 threads the bilayer; that stretch reads ITLFSSFSALVYGLVAIGGWL. Residues 81–89 lie on the Cytoplasmic side of the membrane; sequence GDKILGTKR. The chain crosses the membrane as a helical span at residues 90–110; sequence VIMLGAVVLAIGYALVAWSGH. Position 111 (aspartate 111) is a topological domain, periplasmic. The helical transmembrane segment at 112–132 threads the bilayer; that stretch reads AGIVYMGMAAIAVGNGLFKAN. The Cytoplasmic segment spans residues 133 to 153; it reads PSSLLSTCYAKDDPRLDGAFT. Residues 154-174 traverse the membrane as a helical segment; sequence MYYMSVNIGSFFSMLATPWLA. Over 175–178 the chain is Periplasmic; the sequence is ARYG. A helical transmembrane segment spans residues 179-199; sequence WSTAFALSVVGMLITVVNFAF. Residues 200-219 lie on the Cytoplasmic side of the membrane; sequence CQRWVKSYGSKPDFEPINFR. The chain crosses the membrane as a helical span at residues 220-240; the sequence is NLLLTIVGIVVLIAVATWLLH. Residues 241–246 lie on the Periplasmic side of the membrane; it reads NQDIAR. The helical transmembrane segment at 247 to 267 threads the bilayer; that stretch reads MVLGVIALGIVIIFGKEAFSM. The Cytoplasmic segment spans residues 268–274; sequence HGAARRK. Residues 275–295 traverse the membrane as a helical segment; the sequence is MIVAFILMLQAIIFFVLYSQM. Topologically, residues 296–320 are periplasmic; it reads PTSLNFFAIRNVEHSILGIAFEPEQ. A helical transmembrane segment spans residues 321–341; the sequence is YQALNPFWIIIGSPILAAIYN. The Cytoplasmic portion of the chain corresponds to 342–352; sequence RMGDTLPMPMK. Residues 353-373 traverse the membrane as a helical segment; it reads FAIGMVLCSGAFLILPLGAKF. Topologically, residues 374-383 are periplasmic; that stretch reads ANDAGIVSVN. Residues 384-404 traverse the membrane as a helical segment; the sequence is WLIASYGLQSIGELMISGLGL. The Cytoplasmic portion of the chain corresponds to 405-414; that stretch reads AMVAQLVPQR. Residues 415–435 traverse the membrane as a helical segment; that stretch reads LMGFIMGSWFLTTAGANIIGG. Residues 436–459 are Periplasmic-facing; it reads YVANLMAVPSDVTDPLMSLEVYGR. A helical membrane pass occupies residues 460–480; the sequence is VFMQIGIATAVIAVLMLLTAP. Over 481-501 the chain is Cytoplasmic; that stretch reads KLNRMTQDDDTAEKGSKAATV.

It belongs to the major facilitator superfamily. Proton-dependent oligopeptide transporter (POT/PTR) (TC 2.A.17) family. DtpA subfamily.

The protein resides in the cell inner membrane. Functionally, proton-dependent permease that transports di- and tripeptides. This chain is Dipeptide and tripeptide permease A, found in Salmonella typhimurium (strain LT2 / SGSC1412 / ATCC 700720).